The following is a 776-amino-acid chain: Probable inorganic carbon transporter subunit DabA (776 aa).

The Zn(2+) site is built by Cys-313, Asp-315, His-473, and Cys-488.

Belongs to the inorganic carbon transporter (TC 9.A.2) DabA family. Forms a complex with DabB. Zn(2+) is required as a cofactor.

Its subcellular location is the cell inner membrane. In terms of biological role, part of an energy-coupled inorganic carbon pump. The polypeptide is Probable inorganic carbon transporter subunit DabA (Chromobacterium violaceum (strain ATCC 12472 / DSM 30191 / JCM 1249 / CCUG 213 / NBRC 12614 / NCIMB 9131 / NCTC 9757 / MK)).